The primary structure comprises 255 residues: S-adenosyl-L-methionine-dependent uroporphyrinogen III methyltransferase (255 aa).

Residues P15, 91–93, 121–122, M175, and A232 each bind S-adenosyl-L-homocysteine; these read GGD and TS.

This sequence belongs to the precorrin methyltransferase family. Homodimer.

It catalyses the reaction uroporphyrinogen III + 2 S-adenosyl-L-methionine = precorrin-2 + 2 S-adenosyl-L-homocysteine + H(+). It functions in the pathway porphyrin-containing compound metabolism; siroheme biosynthesis; precorrin-2 from uroporphyrinogen III: step 1/1. Its function is as follows. Involved in the archaeal biosynthesis of heme. Catalyzes the methylation of carbons 2 and 7 of uroporphyrinogen-III (UROGEN) to yield precorrin-2. It does not catalyze the overmethylation of precorrin-2 to trimethylpyrrocorphin. This Methanosarcina barkeri (strain Fusaro / DSM 804) protein is S-adenosyl-L-methionine-dependent uroporphyrinogen III methyltransferase.